Consider the following 499-residue polypeptide: Serine/threonine-protein phosphatase 5 (499 aa).

Residues 1–24 (MAMAEGERTECAETPRDEPPADGT) form a disordered region. N-acetylalanine is present on Ala-2. TPR repeat units lie at residues 28–61 (AEELKTQANDYFKAKDYENAIKFYSQAIELNPGN), 62–95 (AIYYGNRSLAYLRTECYGYALGDATRAIELDKKY), and 96–129 (IKGYYRRAASNMALGKFRAALRDYETVVKVKPND). The tract at residues 184–499 (GKVTITFMKD…ANTLLQLGMM (316 aa)) is catalytic. Positions 242, 244, and 271 each coordinate Mn(2+). His-244 provides a ligand contact to substrate. Substrate contacts are provided by residues Arg-275 and 303 to 304 (NH). Asn-303 provides a ligand contact to Mn(2+). His-304 (proton donor/acceptor) is an active-site residue. Mn(2+) is bound at residue His-352. Arg-400 and His-427 together coordinate substrate. His-427 lines the Mn(2+) pocket. Residues 495–499 (QLGMM) form a required for autoinhibition region.

The protein belongs to the PPP phosphatase family. PP-5 (PP-T) subfamily. In terms of assembly, probably forms a complex composed of chaperones HSP90 and HSP70, co-chaperones STIP1/HOP, CDC37, PPP5C, PTGES3/p23, TSC1 and client protein TSC2. Probably forms a complex composed of chaperones HSP90 and HSP70, co-chaperones CDC37, PPP5C, TSC1 and client protein TSC2, CDK4, AKT, RAF1 and NR3C1; this complex does not contain co-chaperones STIP1/HOP and PTGES3/p23. Part of a complex with HSP90/HSP90AA1 and steroid receptors. Interacts (via TPR repeats) with HSP90AA1 (via TPR repeat-binding motif) or HSPA1A/HSPA1B; the interaction is direct and activates the phosphatase activity. Dissociates from HSPA1A/HSPA1B and HSP90AA1 in response to arachidonic acid. Interacts with CPNE1 (via VWFA domain). Interacts with CDC16, CDC27. Interacts with KLHDC10 (via the 6 Kelch repeats); inhibits the phosphatase activity on MAP3K5. Interacts with ATM and ATR; both interactions are induced by DNA damage and enhance ATM and ATR kinase activity. Interacts with RAD17; reduced by DNA damage. Interacts with nuclear receptors such as NR3C1/GCR and PPARG (activated by agonist); regulates their transactivation activities. Interacts (via TPR repeats) with S100 proteins S100A1, S100A2, S100A6, S100B and S100P; the interactions are calcium-dependent, strongly activate PPP5C phosphatase activity and compete with HSP90AA1 and MAP3K5 interactions. Interacts with SMAD2 and SMAD3 but not with SMAD1; decreases SMAD3 phosphorylation and protein levels. Interacts (via TPR repeats) with CRY1 and CRY2; the interaction with CRY2 down-regulates the phosphatase activity on CSNK1E. Interacts (via TPR repeats) with the active form of RAC1, GNA12 or GNA13; these interactions activate the phosphatase activity and translocate PPP5C to the cell membrane. Interacts with FLCN. It depends on Mg(2+) as a cofactor. Mn(2+) serves as cofactor. Post-translationally, activated by at least two different proteolytic cleavages producing a 56 kDa and a 50 kDa form. As to expression, expressed in liver (at protein level) and brain, enriched in suprachiasmatic nuclei.

The protein resides in the nucleus. The protein localises to the cytoplasm. It is found in the cell membrane. The enzyme catalyses O-phospho-L-seryl-[protein] + H2O = L-seryl-[protein] + phosphate. It carries out the reaction O-phospho-L-threonyl-[protein] + H2O = L-threonyl-[protein] + phosphate. Its activity is regulated as follows. Autoinhibited. In the autoinhibited state, the TPR domain interacts with the catalytic region and prevents substrate access to the catalytic pocket. Allosterically activated by various polyunsaturated fatty acids, free long-chain fatty-acids and long-chain fatty acyl-CoA esters, arachidonic acid being the most effective activator. HSP90A and probably RAC1, GNA12 and GNA13 can also release the autoinhibition by the TPR repeat. Activation by RAC1, GNA12 and GNA13 is synergistic with the one produced by fatty acids binding. Inhibited by okadaic acid. Serine/threonine-protein phosphatase that dephosphorylates a myriad of proteins involved in different signaling pathways including the kinases CSNK1E, ASK1/MAP3K5, PRKDC and RAF1, the nuclear receptors NR3C1, PPARG, ESR1 and ESR2, SMAD proteins and TAU/MAPT. Implicated in wide ranging cellular processes, including apoptosis, differentiation, DNA damage response, cell survival, regulation of ion channels or circadian rhythms, in response to steroid and thyroid hormones, calcium, fatty acids, TGF-beta as well as oxidative and genotoxic stresses. Participates in the control of DNA damage response mechanisms such as checkpoint activation and DNA damage repair through, for instance, the regulation ATM/ATR-signaling and dephosphorylation of PRKDC and TP53BP1. Inhibits ASK1/MAP3K5-mediated apoptosis induced by oxidative stress. Plays a positive role in adipogenesis, mainly through the dephosphorylation and activation of PPARG transactivation function. Also dephosphorylates and inhibits the anti-adipogenic effect of NR3C1. Regulates the circadian rhythms, through the dephosphorylation and activation of CSNK1E. May modulate TGF-beta signaling pathway by the regulation of SMAD3 phosphorylation and protein expression levels. Dephosphorylates and may play a role in the regulation of TAU/MAPT. Through their dephosphorylation, may play a role in the regulation of ions channels such as KCNH2. Dephosphorylate FNIP1, disrupting interaction with HSP90AA1/Hsp90. The protein is Serine/threonine-protein phosphatase 5 (Ppp5c) of Mus musculus (Mouse).